The following is a 401-amino-acid chain: Imidazolonepropionase (401 aa).

Fe(3+)-binding residues include His-66 and His-68. The Zn(2+) site is built by His-66 and His-68. 3 residues coordinate 4-imidazolone-5-propanoate: Arg-75, Tyr-138, and His-171. Position 138 (Tyr-138) interacts with N-formimidoyl-L-glutamate. His-236 serves as a coordination point for Fe(3+). Zn(2+) is bound at residue His-236. Gln-239 contributes to the 4-imidazolone-5-propanoate binding site. Asp-311 serves as a coordination point for Fe(3+). Asp-311 contacts Zn(2+). Residues Asn-313 and Gly-315 each contribute to the N-formimidoyl-L-glutamate site. Thr-316 contacts 4-imidazolone-5-propanoate.

The protein belongs to the metallo-dependent hydrolases superfamily. HutI family. Zn(2+) is required as a cofactor. Requires Fe(3+) as cofactor.

It localises to the cytoplasm. It carries out the reaction 4-imidazolone-5-propanoate + H2O = N-formimidoyl-L-glutamate. It participates in amino-acid degradation; L-histidine degradation into L-glutamate; N-formimidoyl-L-glutamate from L-histidine: step 3/3. Catalyzes the hydrolytic cleavage of the carbon-nitrogen bond in imidazolone-5-propanoate to yield N-formimidoyl-L-glutamate. It is the third step in the universal histidine degradation pathway. In Pseudomonas putida (strain GB-1), this protein is Imidazolonepropionase.